The sequence spans 210 residues: 2-Cys peroxiredoxin BAS1, chloroplastic (210 aa).

The transit peptide at 1–10 directs the protein to the chloroplast; the sequence is DARARSFVAR. Residues 18-177 form the Thioredoxin domain; the sequence is PLVGNKAPDF…TLRTLQALQY (160 aa). The Cysteine sulfenic acid (-SOH) intermediate role is filled by Cys64.

This sequence belongs to the peroxiredoxin family. AhpC/Prx1 subfamily. As to quaternary structure, homodimer; disulfide-linked, upon oxidation. Expressed in leaf blade, sheath, basiplast, stem and green spike. Maximal expression in young developing shoots segments where cell division and elongation take place. Not expressed in roots.

The protein localises to the plastid. Its subcellular location is the chloroplast. It carries out the reaction a hydroperoxide + [thioredoxin]-dithiol = an alcohol + [thioredoxin]-disulfide + H2O. Functionally, thiol-specific peroxidase that catalyzes the reduction of hydrogen peroxide and organic hydroperoxides to water and alcohols, respectively. Plays a role in cell protection against oxidative stress by detoxifying peroxides. May be an antioxidant enzyme particularly in the developing shoot and photosynthesizing leaf. This chain is 2-Cys peroxiredoxin BAS1, chloroplastic (BAS1), found in Hordeum vulgare (Barley).